Here is an 884-residue protein sequence, read N- to C-terminus: Pyruvate, phosphate dikinase (884 aa).

Positions M1–K351 are N-terminal. An ATP-binding site is contributed by R99. The tract at residues R352–S408 is linker 1. The interval P409–I507 is central. T462 carries the post-translational modification Phosphothreonine; by PDRP1. The Tele-phosphohistidine intermediate role is filled by H464. Residues N508–V542 form a linker 2 region. The C-terminal stretch occupies residues L543–Q884. R570, R626, E753, G774, T775, N776, and D777 together coordinate substrate. Mg(2+) is bound at residue E753. D777 is a binding site for Mg(2+). The Proton donor role is filled by C839.

This sequence belongs to the PEP-utilizing enzyme family. In terms of assembly, homodimer. It depends on Mg(2+) as a cofactor. Post-translationally, phosphorylation of Thr-462 in the dark inactivates the enzyme. Dephosphorylation upon light stimulation reactivates the enzyme.

The enzyme catalyses pyruvate + phosphate + ATP = phosphoenolpyruvate + AMP + diphosphate + H(+). Its activity is regulated as follows. Activated by light-induced dephosphorylation. Inhibited by dark-induced phosphorylation. Both reactions are catalyzed by PDRP1. In terms of biological role, catalyzes the reversible phosphorylation of pyruvate and phosphate. The sequence is that of Pyruvate, phosphate dikinase from Giardia intestinalis (Giardia lamblia).